We begin with the raw amino-acid sequence, 350 residues long: uncharacterized protein (350 aa).

This is an uncharacterized protein from Methanocaldococcus jannaschii (strain ATCC 43067 / DSM 2661 / JAL-1 / JCM 10045 / NBRC 100440) (Methanococcus jannaschii).